The sequence spans 198 residues: Recombination protein RecR (198 aa).

The C4-type zinc-finger motif lies at 57 to 72 (CSVCGHITENDPCYIC). Residues 80–175 (SVICVVEDDK…KVTRLAQGLS (96 aa)) form the Toprim domain.

This sequence belongs to the RecR family.

Its function is as follows. May play a role in DNA repair. It seems to be involved in an RecBC-independent recombinational process of DNA repair. It may act with RecF and RecO. The polypeptide is Recombination protein RecR (Staphylococcus aureus (strain JH1)).